We begin with the raw amino-acid sequence, 139 residues long: Large-conductance mechanosensitive channel (139 aa).

The next 3 helical transmembrane spans lie at 19–39, 40–60, and 81–101; these read VGVIIGAAFGGIVSSMVADII, MPIVGAVTGGLDFSNYFLPLS, and GNFLTLTLNFLIVAFVLFMVI.

This sequence belongs to the MscL family. Homopentamer.

Its subcellular location is the cell inner membrane. Functionally, channel that opens in response to stretch forces in the membrane lipid bilayer. May participate in the regulation of osmotic pressure changes within the cell. The chain is Large-conductance mechanosensitive channel from Nitrobacter winogradskyi (strain ATCC 25391 / DSM 10237 / CIP 104748 / NCIMB 11846 / Nb-255).